The sequence spans 233 residues: 7-cyano-7-deazaguanine synthase (233 aa).

7-17 (CSGGLDSVSLA) contacts ATP. Zn(2+) is bound by residues C185, C193, C196, and C199.

This sequence belongs to the QueC family. Zn(2+) is required as a cofactor.

The enzyme catalyses 7-carboxy-7-deazaguanine + NH4(+) + ATP = 7-cyano-7-deazaguanine + ADP + phosphate + H2O + H(+). Its pathway is purine metabolism; 7-cyano-7-deazaguanine biosynthesis. In terms of biological role, catalyzes the ATP-dependent conversion of 7-carboxy-7-deazaguanine (CDG) to 7-cyano-7-deazaguanine (preQ(0)). The polypeptide is 7-cyano-7-deazaguanine synthase (Paracoccus denitrificans (strain Pd 1222)).